The following is a 427-amino-acid chain: Trigger factor (427 aa).

Residues 163–248 enclose the PPIase FKBP-type domain; the sequence is GDIAVIDFKG…IKSIKVKELP (86 aa).

Belongs to the FKBP-type PPIase family. Tig subfamily.

Its subcellular location is the cytoplasm. It catalyses the reaction [protein]-peptidylproline (omega=180) = [protein]-peptidylproline (omega=0). Functionally, involved in protein export. Acts as a chaperone by maintaining the newly synthesized protein in an open conformation. Functions as a peptidyl-prolyl cis-trans isomerase. The chain is Trigger factor from Clostridium beijerinckii (strain ATCC 51743 / NCIMB 8052) (Clostridium acetobutylicum).